Here is a 281-residue protein sequence, read N- to C-terminus: Pantothenate synthetase (281 aa).

Position 30-37 (30-37 (MGALHRGH)) interacts with ATP. His37 functions as the Proton donor in the catalytic mechanism. Gln61 contributes to the (R)-pantoate binding site. Gln61 is a binding site for beta-alanine. 147–150 (GEKD) contacts ATP. Gln153 lines the (R)-pantoate pocket. Residues Ile176 and 184-187 (LSSR) each bind ATP.

It belongs to the pantothenate synthetase family. Homodimer.

Its subcellular location is the cytoplasm. It catalyses the reaction (R)-pantoate + beta-alanine + ATP = (R)-pantothenate + AMP + diphosphate + H(+). The protein operates within cofactor biosynthesis; (R)-pantothenate biosynthesis; (R)-pantothenate from (R)-pantoate and beta-alanine: step 1/1. Its function is as follows. Catalyzes the condensation of pantoate with beta-alanine in an ATP-dependent reaction via a pantoyl-adenylate intermediate. The chain is Pantothenate synthetase from Porphyromonas gingivalis (strain ATCC 33277 / DSM 20709 / CIP 103683 / JCM 12257 / NCTC 11834 / 2561).